The chain runs to 388 residues: Probable tRNA sulfurtransferase (388 aa).

The region spanning 55–162 (VTLDDKLKKI…PEGVLIFTDR (108 aa)) is the THUMP domain. ATP is bound by residues 180-181 (LL), 205-206 (TF), Arg-264, Gly-286, and Gln-295.

Belongs to the ThiI family.

It localises to the cytoplasm. It carries out the reaction [ThiI sulfur-carrier protein]-S-sulfanyl-L-cysteine + a uridine in tRNA + 2 reduced [2Fe-2S]-[ferredoxin] + ATP + H(+) = [ThiI sulfur-carrier protein]-L-cysteine + a 4-thiouridine in tRNA + 2 oxidized [2Fe-2S]-[ferredoxin] + AMP + diphosphate. It catalyses the reaction [ThiS sulfur-carrier protein]-C-terminal Gly-Gly-AMP + S-sulfanyl-L-cysteinyl-[cysteine desulfurase] + AH2 = [ThiS sulfur-carrier protein]-C-terminal-Gly-aminoethanethioate + L-cysteinyl-[cysteine desulfurase] + A + AMP + 2 H(+). It functions in the pathway cofactor biosynthesis; thiamine diphosphate biosynthesis. Functionally, catalyzes the ATP-dependent transfer of a sulfur to tRNA to produce 4-thiouridine in position 8 of tRNAs, which functions as a near-UV photosensor. Also catalyzes the transfer of sulfur to the sulfur carrier protein ThiS, forming ThiS-thiocarboxylate. This is a step in the synthesis of thiazole, in the thiamine biosynthesis pathway. The sulfur is donated as persulfide by IscS. The protein is Probable tRNA sulfurtransferase of Thermotoga maritima (strain ATCC 43589 / DSM 3109 / JCM 10099 / NBRC 100826 / MSB8).